The chain runs to 200 residues: 3-isopropylmalate dehydratase small subunit (200 aa).

It belongs to the LeuD family. LeuD type 1 subfamily. As to quaternary structure, heterodimer of LeuC and LeuD.

It carries out the reaction (2R,3S)-3-isopropylmalate = (2S)-2-isopropylmalate. It functions in the pathway amino-acid biosynthesis; L-leucine biosynthesis; L-leucine from 3-methyl-2-oxobutanoate: step 2/4. Catalyzes the isomerization between 2-isopropylmalate and 3-isopropylmalate, via the formation of 2-isopropylmaleate. This is 3-isopropylmalate dehydratase small subunit from Pectobacterium carotovorum subsp. carotovorum (strain PC1).